A 465-amino-acid chain; its full sequence is E3 ubiquitin-protein ligase parkin (465 aa).

The region spanning 1 to 76 (MIVFVRFNSS…VHIVQRPQRK (76 aa)) is the Ubiquitin-like domain. Ser-65 carries the post-translational modification Phosphoserine; by PINK1. Residues 71–96 (QRPQRKSHETNASGGDKPQSTPEGSI) form a disordered region. Positions 77-237 (SHETNASGGD…LITNNSRSIP (161 aa)) are necessary for PINK1-dependent localization to mitochondria. Thr-80 carries the phosphothreonine modification. The segment covering 80–93 (TNASGGDKPQSTPE) has biased composition (polar residues). The RING-type 0; atypical zinc finger occupies 141–225 (PTYHSFFVYC…PTSDKDTSVA (85 aa)). At Thr-175 the chain carries Phosphothreonine; by PINK1. Residues 204 to 238 (TRAEFFFKCGAHPTSDKDTSVALNLITNNSRSIPC) form an SYT11 binding 1 region. Position 217 is a phosphothreonine (Thr-217). The tract at residues 234–465 (RSIPCIACTD…ACMGDHWFDV (232 aa)) is TRIAD supradomain. Cys-238, Cys-241, Cys-253, His-257, Cys-260, Cys-263, Cys-289, Cys-293, Cys-332, and Cys-337 together coordinate Zn(2+). The segment at 238–293 (CIACTDVRNPVLVFQCNHRHVICLDCFHLYCVTRLNDRQFVHDAQLGYSLPCVAGC) adopts an RING-type 1 zinc-finger fold. The SYT11 binding 2 stretch occupies residues 257–293 (HVICLDCFHLYCVTRLNDRQFVHDAQLGYSLPCVAGC). The segment at 313–377 (NRYQQYGAEE…CKEAYHEGEC (65 aa)) adopts an IBR-type zinc-finger fold. A Glycyl lysine isopeptide (Lys-Gly) (interchain with G-Cter in ISG15) cross-link involves residue Lys-349. Residues Cys-352, Cys-360, Cys-365, and Cys-368 each contribute to the Zn(2+) site. Residue Lys-369 forms a Glycyl lysine isopeptide (Lys-Gly) (interchain with G-Cter in ISG15) linkage. Zn(2+) is bound by residues His-373 and Cys-377. Residues 378–410 (DSMFEASGATSQAYRVDQRAAEQARWEEASKET) are REP. 2 residues coordinate Zn(2+): Cys-418 and Cys-421. The RING-type 2; atypical zinc finger occupies 418–449 (CPRCNVPIEKNGGCMHMKCPQPQCKLEWCWNC). Cys-431 is a catalytic residue. Zn(2+) is bound by residues Cys-436, Cys-441, Cys-446, Cys-449, Cys-457, and His-461.

This sequence belongs to the RBR family. Parkin subfamily. As to quaternary structure, forms an E3 ubiquitin ligase complex with UBE2L3 or UBE2L6. Mediates 'Lys-63'-linked polyubiquitination by associating with UBE2V1. Part of a SCF-like complex, consisting of PRKN, CUL1 and FBXW7. Interacts with SNCAIP. Binds to the C2A and C2B domains of SYT11. Interacts and regulates the turnover of SEPTIN5. Part of a complex, including STUB1, HSP70 and GPR37. The amount of STUB1 in the complex increases during ER stress. STUB1 promotes the dissociation of HSP70 from PRKN and GPR37, thus facilitating PRKN-mediated GPR37 ubiquitination. HSP70 transiently associates with unfolded GPR37 and inhibits the E3 activity of PRKN, whereas, STUB1 enhances the E3 activity of PRKN through promotion of dissociation of HSP70 from PRKN-GPR37 complexes. Interacts with PSMD4 and PACRG. Interacts with LRRK2. Interacts with RANBP2. Interacts with SUMO1 but not SUMO2, which promotes nuclear localization and autoubiquitination. Interacts (via first RING-type domain) with AIMP2 (via N-terminus). Interacts with PSMA7 and RNF41. Interacts with PINK1. Forms a complex with PINK1 and PARK7. Interacts with CHPF, the interaction with isoform 2 may facilitate PRKN transport into the mitochondria. Interacts with MFN2 (phosphorylated), promotes PRKN localization in dysfunctional depolarized mitochondria. Interacts with FBXO7; this promotes translocation to dysfunctional depolarized mitochondria. Interacts with ZNF746. Interacts with heat shock protein 70 family members, including HSPA1L, HSPA1A and HSPA8; interaction HSPA1L promotes translocation to damaged mitochondria. Interacts with BAG4 and, to a lesser extent, BAG5; interaction with BAG4 inhibits translocation to damaged mitochondria. Forms a complex with PRKN and PARK7. Interacts with AMBRA1. In terms of processing, auto-ubiquitinates in an E2-dependent manner leading to its own degradation. Also polyubiquitinated by RNF41 for proteasomal degradation. S-nitrosylated. Post-translationally, phosphorylated. Activation requires phosphorylation at Ser-65 by PINK1 and binding to PINK1 phosphorylated ubiquitin. Phosphorylation at Thr-175 by PINK1 and at Thr-217 is important for mitochondrial localization. In terms of tissue distribution, largely confined to neuronal elements, including fibers and neuropil. Highly expressed at the forebrain level, in pyramidal cells of layer V, in various cortical regions and cerebellum. Expressed in the nucleus of diagonal band of Broca, nucleus basalis, bed nucleus of the stria terminalis, and olfactory tubercle. Moderate expression is seen in most neurons of the subthalamic nucleus, heart, skeletal muscle and testis. Moderate expression was found in frontal cortex, parietal cortex, cerebellum, heart, skeletal muscle and testis.

Its subcellular location is the cytoplasm. It localises to the cytosol. The protein resides in the nucleus. The protein localises to the endoplasmic reticulum. It is found in the mitochondrion. Its subcellular location is the mitochondrion outer membrane. It localises to the cell projection. The protein resides in the neuron projection. The protein localises to the postsynaptic density. It is found in the presynapse. The catalysed reaction is [E2 ubiquitin-conjugating enzyme]-S-ubiquitinyl-L-cysteine + [acceptor protein]-L-lysine = [E2 ubiquitin-conjugating enzyme]-L-cysteine + [acceptor protein]-N(6)-ubiquitinyl-L-lysine.. It participates in protein modification; protein ubiquitination. With respect to regulation, in the autoinhibited state the side chain of Phe-463 inserts into a hydrophobic groove in RING-0, occluding the ubiquitin acceptor site Cys-431, whereas the REP repressor element binds RING-1 and blocks its E2-binding site. Activation of PRKN requires 2 steps: (1) phosphorylation at Ser-65 by PINK1 and (2) binding to phosphorylated ubiquitin, leading to unlock repression of the catalytic Cys-431 by the RING-0 region via an allosteric mechanism and converting PRKN to its fully-active form. According to another report, phosphorylation at Ser-65 by PINK1 is not essential for activation and only binding to phosphorylated ubiquitin is essential to unlock repression. In addition, ISG15 conjugation positively regulates its ubiquitin E3 ligase activity by suppressing the intramolecular interaction that maintains its autoinhibited conformation. Functionally, functions within a multiprotein E3 ubiquitin ligase complex, catalyzing the covalent attachment of ubiquitin moieties onto substrate proteins. Substrates include SYT11 and VDAC1. Other substrates are BCL2, CCNE1, GPR37, RHOT1/MIRO1, MFN1, MFN2, STUB1, SNCAIP, SEPTIN5, TOMM20, USP30, ZNF746, MIRO1 and AIMP2. Mediates monoubiquitination as well as 'Lys-6', 'Lys-11', 'Lys-48'-linked and 'Lys-63'-linked polyubiquitination of substrates depending on the context. Participates in the removal and/or detoxification of abnormally folded or damaged protein by mediating 'Lys-63'-linked polyubiquitination of misfolded proteins such as PARK7: 'Lys-63'-linked polyubiquitinated misfolded proteins are then recognized by HDAC6, leading to their recruitment to aggresomes, followed by degradation. Mediates 'Lys-63'-linked polyubiquitination of a 22 kDa O-linked glycosylated isoform of SNCAIP, possibly playing a role in Lewy-body formation. Mediates monoubiquitination of BCL2, thereby acting as a positive regulator of autophagy. Protects against mitochondrial dysfunction during cellular stress, by acting downstream of PINK1 to coordinate mitochondrial quality control mechanisms that remove and replace dysfunctional mitochondrial components. Depending on the severity of mitochondrial damage and/or dysfunction, activity ranges from preventing apoptosis and stimulating mitochondrial biogenesis to regulating mitochondrial dynamics and eliminating severely damaged mitochondria via mitophagy. Activation and recruitment onto the outer membrane of damaged/dysfunctional mitochondria (OMM) requires PINK1-mediated phosphorylation of both PRKN and ubiquitin. After mitochondrial damage, functions with PINK1 to mediate the decision between mitophagy or preventing apoptosis by inducing either the poly- or monoubiquitination of VDAC1, respectively; polyubiquitination of VDAC1 promotes mitophagy, while monoubiquitination of VDAC1 decreases mitochondrial calcium influx which ultimately inhibits apoptosis. When cellular stress results in irreversible mitochondrial damage, promotes the autophagic degradation of dysfunctional depolarized mitochondria (mitophagy) by promoting the ubiquitination of mitochondrial proteins such as TOMM20, RHOT1/MIRO1, MFN1 and USP30. Preferentially assembles 'Lys-6'-, 'Lys-11'- and 'Lys-63'-linked polyubiquitin chains, leading to mitophagy. The PINK1-PRKN pathway also promotes fission of damaged mitochondria by PINK1-mediated phosphorylation which promotes the PRKN-dependent degradation of mitochondrial proteins involved in fission such as MFN2. This prevents the refusion of unhealthy mitochondria with the mitochondrial network or initiates mitochondrial fragmentation facilitating their later engulfment by autophagosomes. Regulates motility of damaged mitochondria via the ubiquitination and subsequent degradation of MIRO1 and MIRO2; in motor neurons, this likely inhibits mitochondrial intracellular anterograde transport along the axons which probably increases the chance of the mitochondria undergoing mitophagy in the soma. Involved in mitochondrial biogenesis via the 'Lys-48'-linked polyubiquitination of transcriptional repressor ZNF746/PARIS which leads to its subsequent proteasomal degradation and allows activation of the transcription factor PPARGC1A. Limits the production of reactive oxygen species (ROS). Regulates cyclin-E during neuronal apoptosis. In collaboration with CHPF isoform 2, may enhance cell viability and protect cells from oxidative stress. Independently of its ubiquitin ligase activity, protects from apoptosis by the transcriptional repression of p53/TP53. May protect neurons against alpha synuclein toxicity, proteasomal dysfunction, GPR37 accumulation, and kainate-induced excitotoxicity. May play a role in controlling neurotransmitter trafficking at the presynaptic terminal and in calcium-dependent exocytosis. May represent a tumor suppressor gene. This Rattus norvegicus (Rat) protein is E3 ubiquitin-protein ligase parkin.